The primary structure comprises 440 residues: Proline--tRNA ligase (440 aa).

Belongs to the class-II aminoacyl-tRNA synthetase family. ProS type 2 subfamily. In terms of assembly, homodimer.

The protein resides in the cytoplasm. The catalysed reaction is tRNA(Pro) + L-proline + ATP = L-prolyl-tRNA(Pro) + AMP + diphosphate. Functionally, catalyzes the attachment of proline to tRNA(Pro) in a two-step reaction: proline is first activated by ATP to form Pro-AMP and then transferred to the acceptor end of tRNA(Pro). This is Proline--tRNA ligase from Methylocella silvestris (strain DSM 15510 / CIP 108128 / LMG 27833 / NCIMB 13906 / BL2).